The sequence spans 402 residues: Sulfate adenylyltransferase (402 aa).

This sequence belongs to the sulfate adenylyltransferase family.

The catalysed reaction is sulfate + ATP + H(+) = adenosine 5'-phosphosulfate + diphosphate. It participates in sulfur metabolism; hydrogen sulfide biosynthesis; sulfite from sulfate: step 1/3. This is Sulfate adenylyltransferase from Thiobacillus denitrificans (strain ATCC 25259 / T1).